The chain runs to 409 residues: Isocitrate dehydrogenase [NADP] 1 (409 aa).

NADP(+)-binding residues include Lys75, Thr78, Thr80, and Arg85. Mn(2+)-binding residues include Asp255, Asp278, and Asp282. 5 residues coordinate NADP(+): Gly313, Thr314, Val315, His318, and Asn331.

It belongs to the isocitrate and isopropylmalate dehydrogenases family. As to quaternary structure, homodimer. Mg(2+) serves as cofactor. Requires Mn(2+) as cofactor.

The catalysed reaction is D-threo-isocitrate + NADP(+) = 2-oxoglutarate + CO2 + NADPH. Functionally, catalyzes the oxidative decarboxylation of isocitrate to 2-oxoglutarate and carbon dioxide with the concomitant reduction of NADP(+). The polypeptide is Isocitrate dehydrogenase [NADP] 1 (icd) (Mycobacterium bovis (strain ATCC BAA-935 / AF2122/97)).